Here is a 423-residue protein sequence, read N- to C-terminus: Serine--tRNA ligase (423 aa).

231–233 provides a ligand contact to L-serine; the sequence is TGE. An ATP-binding site is contributed by 262-264; sequence RQE. E285 is an L-serine binding site. Position 349-352 (349-352) interacts with ATP; sequence EISS. S385 contacts L-serine.

This sequence belongs to the class-II aminoacyl-tRNA synthetase family. Type-1 seryl-tRNA synthetase subfamily. In terms of assembly, homodimer. The tRNA molecule binds across the dimer.

It localises to the cytoplasm. It carries out the reaction tRNA(Ser) + L-serine + ATP = L-seryl-tRNA(Ser) + AMP + diphosphate + H(+). The catalysed reaction is tRNA(Sec) + L-serine + ATP = L-seryl-tRNA(Sec) + AMP + diphosphate + H(+). The protein operates within aminoacyl-tRNA biosynthesis; selenocysteinyl-tRNA(Sec) biosynthesis; L-seryl-tRNA(Sec) from L-serine and tRNA(Sec): step 1/1. Functionally, catalyzes the attachment of serine to tRNA(Ser). Is also able to aminoacylate tRNA(Sec) with serine, to form the misacylated tRNA L-seryl-tRNA(Sec), which will be further converted into selenocysteinyl-tRNA(Sec). This chain is Serine--tRNA ligase, found in Phytoplasma mali (strain AT).